Reading from the N-terminus, the 150-residue chain is Monooxygenase nsrS (150 aa).

This sequence belongs to the avfA family.

It participates in secondary metabolite biosynthesis. In terms of biological role, monooxygenase; part of the gene cluster that mediates the biosynthesis of the tetrahydroxanthone dimer neosartorin, which exhibits antibacterial activity. The two different monomeric units appear to be synthesized by the same set of enzymes, among which the Baeyer-Villiger monooxygenase nsrF is the key enzyme for the divergence of the biosynthetic routes. The pathway begins with the synthesis of atrochrysone thioester by the polyketide synthase nsrB. The atrochrysone carboxyl ACP thioesterase nsrC then breaks the thioester bond and releases the atrochrysone carboxylic acid from AacuL. Atrochrysone carboxylic acid is decarboxylated by the decarboxylase nsrE, and oxidized by the anthrone oxygenase nsrD to yield emodin. Emodin is then reduced to emodin hydroquinone by the oxidoreductase nsrR. A-ring reduction by the short chain dehydrogenase nsrJ, dehydration by the scytalone dehydratase-like protein nsrI and probable spontaneous re-oxidation, results in overall deoxygenation to chrysophanol. The Baeyer-Villiger monooxygenase nsrF accepts chrysophanol as a substrate to insert one oxygen atom at two different positions to yield the precursors of both monomric units. NsrF is promiscuous/flexible in interacting with the 2 (non methylated and methylated) aromatic rings of chrysophanol, thus diverging the biosynthetic pathway at this point. After the hydrolysis of the lactones, methylesterification by the methyltransferase nsrG yields respectively moniliphenone and 2,2',6'-trihydroxy-4-methyl-6-methoxya-cyldiphenylmethanone. The next steps are the hydroxylation by the FAD-dependent monooxygenase nsrK, followed by isomerization by the monooxygenase nsrQ. The short chain dehydrogenase/reductase nsrO then catalyzes the C-5 ketoreduction to give the xanthone skeleton of blennolide C and 5-acetylblennolide A. The acetyltransferase nsrL has a strict substrate specificity and uses only blennolide A but not blennolide C to yield 5-acetylblennolide A as the single-acetylated product. In the final step of the biosynthesis, the heterodimerization of the 2 xanthones, blennolide C and 5-acetylblennolide A, is catalyzed by the cytochrome P450 monooxygenase nsrP. NsrP can utilize at least three different xanthones as its substrates to perform the dimerization reaction. This is Monooxygenase nsrS from Aspergillus novofumigatus (strain IBT 16806).